The following is a 404-amino-acid chain: Sulfate adenylyltransferase (404 aa).

The protein belongs to the sulfate adenylyltransferase family.

The catalysed reaction is sulfate + ATP + H(+) = adenosine 5'-phosphosulfate + diphosphate. The protein operates within sulfur metabolism; hydrogen sulfide biosynthesis; sulfite from sulfate: step 1/3. This chain is Sulfate adenylyltransferase, found in Chlorobium chlorochromatii (strain CaD3).